A 141-amino-acid polypeptide reads, in one-letter code: UPF0310 protein SGO_1818 (141 aa).

This sequence belongs to the UPF0310 family.

In Streptococcus gordonii (strain Challis / ATCC 35105 / BCRC 15272 / CH1 / DL1 / V288), this protein is UPF0310 protein SGO_1818.